We begin with the raw amino-acid sequence, 369 residues long: Putative FAD-dependent monooxygenase YetM (369 aa).

A signal peptide spans 1 to 32; that stretch reads MKHMLIAGGGIGGLSAAISLRKAGFSVTLCEA. Residues G12, 31–32, V126, and D285 contribute to the FAD site; that span reads EA.

It depends on FAD as a cofactor.

In Bacillus subtilis (strain 168), this protein is Putative FAD-dependent monooxygenase YetM (yetM).